The chain runs to 385 residues: 8-amino-7-oxononanoate synthase (385 aa).

Residue Arg-21 coordinates substrate. 108-109 (GF) is a pyridoxal 5'-phosphate binding site. His-133 contributes to the substrate binding site. Pyridoxal 5'-phosphate-binding residues include Ser-179, His-207, and Thr-233. N6-(pyridoxal phosphate)lysine is present on Lys-236. Thr-352 contributes to the substrate binding site.

Belongs to the class-II pyridoxal-phosphate-dependent aminotransferase family. BioF subfamily. In terms of assembly, homodimer. The cofactor is pyridoxal 5'-phosphate.

It catalyses the reaction 6-carboxyhexanoyl-[ACP] + L-alanine + H(+) = (8S)-8-amino-7-oxononanoate + holo-[ACP] + CO2. The protein operates within cofactor biosynthesis; biotin biosynthesis. Catalyzes the decarboxylative condensation of pimeloyl-[acyl-carrier protein] and L-alanine to produce 8-amino-7-oxononanoate (AON), [acyl-carrier protein], and carbon dioxide. This Salmonella paratyphi A (strain ATCC 9150 / SARB42) protein is 8-amino-7-oxononanoate synthase.